A 324-amino-acid polypeptide reads, in one-letter code: Glyoxylate/hydroxypyruvate reductase B (324 aa).

Active-site residues include R237 and E266. H285 functions as the Proton donor in the catalytic mechanism.

The protein belongs to the D-isomer specific 2-hydroxyacid dehydrogenase family. GhrB subfamily. In terms of assembly, homodimer.

The protein resides in the cytoplasm. The enzyme catalyses glycolate + NADP(+) = glyoxylate + NADPH + H(+). It carries out the reaction (R)-glycerate + NAD(+) = 3-hydroxypyruvate + NADH + H(+). It catalyses the reaction (R)-glycerate + NADP(+) = 3-hydroxypyruvate + NADPH + H(+). Catalyzes the NADPH-dependent reduction of glyoxylate and hydroxypyruvate into glycolate and glycerate, respectively. This chain is Glyoxylate/hydroxypyruvate reductase B, found in Salmonella paratyphi A (strain ATCC 9150 / SARB42).